The primary structure comprises 56 residues: Arcadin-3 (56 aa).

It localises to the cytoplasm. It is found in the cytoskeleton. Functionally, part of an actin-like archaeal cytoskeleton. The sequence is that of Arcadin-3 from Pyrobaculum calidifontis (strain DSM 21063 / JCM 11548 / VA1).